Reading from the N-terminus, the 50-residue chain is MVRYRCCRSQSRSRCRRRRRRCRRRRRRCCQRRRVRKCCRRTYTLRCRRY.

Disulfide bonds link Cys-7/Cys-15 and Cys-39/Cys-47.

Belongs to the protamine P1 family. As to quaternary structure, cross-linked by interchain disulfide bonds around the DNA-helix. In terms of tissue distribution, testis.

The protein localises to the nucleus. Its subcellular location is the chromosome. Its function is as follows. Protamines substitute for histones in the chromatin of sperm during the haploid phase of spermatogenesis. They compact sperm DNA into a highly condensed, stable and inactive complex. This is Sperm protamine P1 (PRM1) from Oryctolagus cuniculus (Rabbit).